The sequence spans 361 residues: Diacylglycerol O-acyltransferase 2 (361 aa).

Over 1-42 (MKTIIAAYSGVLRGTGSSLLSAVHDLPNIPWLSKSSVVRHLQ) the chain is Cytoplasmic. The chain crosses the membrane as a helical span at residues 43–61 (IISVLQWVLSFLILGVACT). The Lumenal segment spans residues 62-65 (AVLV). A helical membrane pass occupies residues 66-85 (YIFCTDLWLIAALYLTWMVL). Topologically, residues 86–361 (DWNTPYKGGR…LHDSEMLEIV (276 aa)) are cytoplasmic.

This sequence belongs to the diacylglycerol acyltransferase family.

It localises to the endoplasmic reticulum membrane. It is found in the lipid droplet. Its subcellular location is the cytoplasm. The protein localises to the perinuclear region. It catalyses the reaction an acyl-CoA + a 1,2-diacyl-sn-glycerol = a triacyl-sn-glycerol + CoA. The catalysed reaction is all-trans-retinol + an acyl-CoA = an all-trans-retinyl ester + CoA. It carries out the reaction 2-(9Z-octadecenoyl)-glycerol + (9Z)-octadecenoyl-CoA = 1,2-di-(9Z-octadecenoyl)-sn-glycerol + CoA. The enzyme catalyses 1,2-di-(9Z-octadecenoyl)-sn-glycerol + (9Z)-octadecenoyl-CoA = 1,2,3-tri-(9Z-octadecenoyl)-glycerol + CoA. It catalyses the reaction all-trans-retinol + hexadecanoyl-CoA = all-trans-retinyl hexadecanoate + CoA. The catalysed reaction is 1-O-(9Z-octadecenyl)-glycerol + (9Z)-octadecenoyl-CoA = 1-O-(9Z-octadecyl)-3-(9Z-octadecenoyl)-glycerol + CoA. It carries out the reaction 1-(9Z-octadecenoyl)-glycerol + (9Z)-octadecenoyl-CoA = 1,2-di-(9Z-octadecenoyl)-glycerol + CoA. The enzyme catalyses 1,2-di-(9Z-octadecenoyl)-sn-glycerol + hexadecanoyl-CoA = 1,2-di-(9Z)-octadecenoyl-3-hexadecanoyl-sn-glycerol + CoA. It catalyses the reaction 1,3-di-(9Z-octadecenoyl)-glycerol + (9Z)-octadecenoyl-CoA = 1,2,3-tri-(9Z-octadecenoyl)-glycerol + CoA. The catalysed reaction is 2,3-di-(9Z)-octadecenoyl-sn-glycerol + (9Z)-octadecenoyl-CoA = 1,2,3-tri-(9Z-octadecenoyl)-glycerol + CoA. It carries out the reaction 2-(9Z-octadecenoyl)-glycerol + hexadecanoyl-CoA = 1-hexadecanoyl-2-(9Z-octadecenoyl)-sn-glycerol + CoA. The protein operates within glycerolipid metabolism; triacylglycerol biosynthesis. Functionally, essential acyltransferase that catalyzes the terminal and only committed step in triacylglycerol synthesis by using diacylglycerol and fatty acyl CoA as substrates. Required for synthesis and storage of intracellular triglycerides. Probably plays a central role in cytosolic lipid accumulation. The sequence is that of Diacylglycerol O-acyltransferase 2 (dgat2) from Xenopus tropicalis (Western clawed frog).